Reading from the N-terminus, the 242-residue chain is 7-cyano-7-deazaguanine synthase (242 aa).

Residues 1-25 are disordered; sequence MNSRKDKNSKGKNSDTKRKKSSQEN. 32 to 42 contacts ATP; sequence LSGGLDSTTCL. Cysteine 212, cysteine 221, cysteine 224, and cysteine 227 together coordinate Zn(2+).

The protein belongs to the QueC family. Zn(2+) is required as a cofactor.

The enzyme catalyses 7-carboxy-7-deazaguanine + NH4(+) + ATP = 7-cyano-7-deazaguanine + ADP + phosphate + H2O + H(+). It participates in purine metabolism; 7-cyano-7-deazaguanine biosynthesis. In terms of biological role, catalyzes the ATP-dependent conversion of 7-carboxy-7-deazaguanine (CDG) to 7-cyano-7-deazaguanine (preQ(0)). This Leptospira borgpetersenii serovar Hardjo-bovis (strain JB197) protein is 7-cyano-7-deazaguanine synthase.